The sequence spans 437 residues: Nuclear hormone receptor family member nhr-28 (437 aa).

Positions 5 to 80 (KSPCSVCGEA…VGMRKSAVQR (76 aa)) form a DNA-binding region, nuclear receptor. 2 consecutive NR C4-type zinc fingers follow at residues 8-28 (CSVC…CRAC) and 44-68 (CRAM…FTKC). One can recognise an NR LBD domain in the interval 115–376 (YEETGMPTLS…ETFYELVSGR (262 aa)).

The protein belongs to the nuclear hormone receptor family. Expressed in the pharynx, intestine and hypodermis.

The protein resides in the nucleus. Its function is as follows. Orphan nuclear receptor. This is Nuclear hormone receptor family member nhr-28 (nhr-28) from Caenorhabditis elegans.